Here is a 107-residue protein sequence, read N- to C-terminus: Iron-binding protein IscA (107 aa).

Residues Cys-35, Cys-99, and Cys-101 each coordinate Fe cation.

The protein belongs to the HesB/IscA family. In terms of assembly, homodimer; may form tetramers and higher multimers. Fe cation is required as a cofactor.

Functionally, is able to transfer iron-sulfur clusters to apo-ferredoxin. Multiple cycles of [2Fe2S] cluster formation and transfer are observed, suggesting that IscA acts catalytically. Recruits intracellular free iron so as to provide iron for the assembly of transient iron-sulfur cluster in IscU in the presence of IscS, L-cysteine and the thioredoxin reductase system TrxA/TrxB. In Pectobacterium atrosepticum (strain SCRI 1043 / ATCC BAA-672) (Erwinia carotovora subsp. atroseptica), this protein is Iron-binding protein IscA.